A 232-amino-acid polypeptide reads, in one-letter code: Platelet-activating factor acetylhydrolase IB subunit alpha1 (232 aa).

Residues 1-20 are disordered; it reads MSGEGENPASKPTPVQDVQG. Residue serine 2 is modified to N-acetylserine. Residue serine 2 is modified to Phosphoserine. Catalysis depends on residues serine 48, aspartate 193, and histidine 196.

Belongs to the 'GDSL' lipolytic enzyme family. Platelet-activating factor acetylhydrolase IB beta/gamma subunits subfamily. As to quaternary structure, forms a catalytic dimer which is either homodimer (alpha1/alpha1 homodimer) or heterodimer with PAFAH1B2 (alpha1/alpha2 heterodimer). Component of the cytosolic (PAF-AH (I)) heterotetrameric enzyme, which is composed of PAFAH1B1 (beta), PAFAH1B2 (alpha2) and PAFAH1B3 (alpha1) subunits. The catalytic activity of the enzyme resides in the alpha1 (PAFAH1B3) and alpha2 (PAFAH1B2) subunits, whereas the beta subunit (PAFAH1B1) has regulatory activity. Trimer formation is not essential for the catalytic activity. Interacts with VLDLR; this interaction may modulate the Reelin pathway. As to expression, expressed in brain, spleen, lung, liver, kidney and testis. Not expressed in heart and skeletal muscle. Expressed in fetal brain as heterodimer. Not expressed in adult tissues. Expressed exclusively in granule cells.

It is found in the cytoplasm. It catalyses the reaction a 1-O-alkyl-2-acetyl-sn-glycero-3-phosphocholine + H2O = a 1-O-alkyl-sn-glycero-3-phosphocholine + acetate + H(+). It carries out the reaction 1-O-hexadecyl-2-acetyl-sn-glycero-3-phosphocholine + H2O = 1-O-hexadecyl-sn-glycero-3-phosphocholine + acetate + H(+). The enzyme catalyses 1-O-hexadecyl-2-acetyl-sn-glycero-3-phosphate + H2O = 1-O-hexadecyl-sn-glycero-3-phosphate + acetate + H(+). With respect to regulation, beta subunit (PAFAH1B1) inhibits the acetylhydrolase activity of the alpha1/alpha1 catalytic homodimer. Alpha1 catalytic subunit of the cytosolic type I platelet-activating factor (PAF) acetylhydrolase (PAF-AH (I)) heterotetrameric enzyme that catalyzes the hydrolyze of the acetyl group at the sn-2 position of PAF and its analogs and modulates the action of PAF. The activity and substrate specificity of PAF-AH (I) are affected by its subunit composition. Both alpha1/alpha1 homodimer (PAFAH1B3/PAFAH1B3 homodimer) and alpha1/alpha2 heterodimer(PAFAH1B3/PAFAH1B2 heterodimer) hydrolyze 1-O-alkyl-2-acetyl-sn-glycero-3-phosphoric acid (AAGPA) more efficiently than PAF, but they have little hydrolytic activity towards 1-O-alkyl-2-acetyl-sn-glycero-3-phosphorylethanolamine (AAGPE). Plays an important role during the development of brain. This Rattus norvegicus (Rat) protein is Platelet-activating factor acetylhydrolase IB subunit alpha1.